A 155-amino-acid polypeptide reads, in one-letter code: Small ribosomal subunit protein uS7c (155 aa).

It belongs to the universal ribosomal protein uS7 family. As to quaternary structure, part of the 30S ribosomal subunit.

Its subcellular location is the plastid. It is found in the chloroplast. One of the primary rRNA binding proteins, it binds directly to 16S rRNA where it nucleates assembly of the head domain of the 30S subunit. The polypeptide is Small ribosomal subunit protein uS7c (rps7) (Ananas comosus (Pineapple)).